The primary structure comprises 119 residues: UPF0738 protein BAA_1286 (119 aa).

Belongs to the UPF0738 family.

The chain is UPF0738 protein BAA_1286 from Bacillus anthracis (strain A0248).